The chain runs to 554 residues: Carboxypeptidase Y homolog A (554 aa).

An N-terminal signal peptide occupies residues 1–17 (MRVAASTVLLGVASAAS). The propeptide occupies 18 to 137 (FQQQTQHVLS…KLADFNLRVK (120 aa)). Disulfide bonds link Cys-191–Cys-431, Cys-325–Cys-339, Cys-349–Cys-372, Cys-356–Cys-365, and Cys-394–Cys-401. The N-linked (GlcNAc...) asparagine glycan is linked to Asn-222. Ser-278 is a catalytic residue. Asp-470 is a catalytic residue. A glycan (N-linked (GlcNAc...) asparagine) is linked at Asn-518. His-529 is an active-site residue.

Belongs to the peptidase S10 family.

The protein resides in the vacuole. The catalysed reaction is Release of a C-terminal amino acid with broad specificity.. In terms of biological role, vacuolar carboxypeptidase involved in degradation of small peptides. Digests preferentially peptides containing an aliphatic or hydrophobic residue in P1' position, as well as methionine, leucine or phenylalanine in P1 position of ester substrate. In Podospora anserina (strain S / ATCC MYA-4624 / DSM 980 / FGSC 10383) (Pleurage anserina), this protein is Carboxypeptidase Y homolog A (CPYA).